We begin with the raw amino-acid sequence, 457 residues long: MQASRHSIQAEPGWYVSAQQPEEAVAADEWSPLLSNEPHRQGSSGASFGLSVFNVMNAIMGSGILGLAYVMANTGILGFSFLLLFVALLASYSVHLLLAMCIHTAVTSYEDLGLFAFGLPGKVVVAGTIIIQNIGAMSSYLLIIKTELPAAISEFLPSDHSGSWYLDGQMLLIIICVGIVFPLSLLPKIGFLGYTSSLSFFFMVFFALVVVIKKWAVPCPVTLDCINEVFQISNATDDCKPKLFHFSKESVYAIPTMAFSFLCHTSVLPIYCELQSPSKKRMQNVTNTAIALSFLVYFVSALFGYLTFYDKVESELLQGYSKYLPHDVIVMAVKLCILFAVLLTAPLIHFPARKALMMILFSNYPFSWIRHSLTTAALNAIIVVLAIYVPDIRNVFGVVGASTSTCLIFVFPGLFYLKLSREDFLSWKKLGALFLLLTGAVVGSFSLVLIIFDWVNK.

N-acetylmethionine is present on methionine 1. Residues serine 4 and serine 7 each carry the phosphoserine modification. The next 5 helical transmembrane spans lie at 48–68 (FGLSVFNVMNAIMGSGILGLA), 70–90 (VMANTGILGFSFLLLFVALLA), 112–132 (LGLFAFGLPGKVVVAGTIIIQ), 171–191 (LLIIICVGIVFPLSLLPKIGF), and 192–212 (LGYTSSLSFFFMVFFALVVVI). A disulfide bond links cysteine 219 and cysteine 239. Helical transmembrane passes span 251 to 271 (VYAIPTMAFSFLCHTSVLPIY), 289 to 309 (AIALSFLVYFVSALFGYLTFY), 328 to 348 (VIVMAVKLCILFAVLLTAPLI), 372 to 392 (SLTTAALNAIIVVLAIYVPDI), 395 to 415 (VFGVVGASTSTCLIFVFPGLF), and 432 to 452 (ALFLLLTGAVVGSFSLVLIIF).

This sequence belongs to the amino acid/polyamine transporter 2 family. As to expression, expressed exclusively in neurons and not in astrocytes and glia cells. Highly expressed in the synapse. Highly expressed in glutamatergic neurons. Primarily expressed in excitatory neurons, with some minor expression in inhibitory neurons.

It localises to the cell membrane. The protein localises to the synapse. The enzyme catalyses L-glutamine(out) = L-glutamine(in). The catalysed reaction is L-glutamate(out) = L-glutamate(in). In terms of biological role, amino acid transporter with an apparent selectivity for L-glutamine and L-glutamate. May facilitate glutamine uptake in excitatory neurons. The transport mechanism remains to be elucidated. This Mus musculus (Mouse) protein is Solute carrier family 38 member 6.